A 741-amino-acid polypeptide reads, in one-letter code: Zinc metalloproteinase nas-30 (741 aa).

Low complexity-rich tracts occupy residues K71–P85 and P97–P118. A disordered region spans residues K71–Q122. The 193-residue stretch at K324–N516 folds into the Peptidase M12A domain. Intrachain disulfides connect C364–C515, C385–C404, C519–C539, C541–C550, C562–C583, and C610–C630. A Zn(2+)-binding site is contributed by H412. E413 is a catalytic residue. Positions 416 and 422 each coordinate Zn(2+). The EGF-like domain maps to C539–C550. Residues C550–L648 enclose the CUB domain. N-linked (GlcNAc...) asparagine glycosylation occurs at N633.

It depends on Zn(2+) as a cofactor.

Its function is as follows. Metalloprotease. This Caenorhabditis elegans protein is Zinc metalloproteinase nas-30.